A 127-amino-acid polypeptide reads, in one-letter code: MGFRKFSPFLALSILVLYQAGSLQAAPFRSALESSPDPATLSKEDARLLLAALVQDYVQMKASELKQEQETQGSSSAAQKRACNTATCVTHRLAGLLSRSGGMVKSNFVPTNVGSKAFGRRRRDLQA.

The N-terminal stretch at 1–25 (MGFRKFSPFLALSILVLYQAGSLQA) is a signal peptide. A propeptide spanning residues 26-79 (APFRSALESSPDPATLSKEDARLLLAALVQDYVQMKASELKQEQETQGSSSAAQ) is cleaved from the precursor. The cysteines at positions 83 and 88 are disulfide-linked. Phe118 bears the Phenylalanine amide mark. A propeptide spanning residues 124-127 (DLQA) is cleaved from the precursor.

This sequence belongs to the calcitonin family. Expressed in spinal cord, pituitary and thalamus.

The protein localises to the secreted. Functionally, CALCB/CGRP2 is a peptide hormone that induces vasodilation mediated by the CALCRL-RAMP1 receptor complex. Dilates a variety of vessels including the coronary, cerebral and systemic vasculature. Its abundance in the CNS also points toward a neurotransmitter or neuromodulator role. The protein is Calcitonin gene-related peptide 2 of Homo sapiens (Human).